The following is a 240-amino-acid chain: Uridylate kinase (240 aa).

12-15 (KLSG) contributes to the ATP binding site. Residues 20–25 (GEQGFG) form an involved in allosteric activation by GTP region. Glycine 54 serves as a coordination point for UMP. Positions 55 and 59 each coordinate ATP. UMP contacts are provided by residues aspartate 74 and 135–142 (TGNPYFST). ATP is bound by residues asparagine 163, tyrosine 169, and aspartate 172.

This sequence belongs to the UMP kinase family. Homohexamer.

The protein localises to the cytoplasm. The catalysed reaction is UMP + ATP = UDP + ADP. Its pathway is pyrimidine metabolism; CTP biosynthesis via de novo pathway; UDP from UMP (UMPK route): step 1/1. With respect to regulation, allosterically activated by GTP. Inhibited by UTP. Functionally, catalyzes the reversible phosphorylation of UMP to UDP. This is Uridylate kinase from Bacillus cereus (strain ATCC 14579 / DSM 31 / CCUG 7414 / JCM 2152 / NBRC 15305 / NCIMB 9373 / NCTC 2599 / NRRL B-3711).